The following is a 43-amino-acid chain: ALVGPSGMILADGTPVQFPAHAKPVLTGPSGIVFSNGQNIQLH.

2 repeat units span residues 1–18 and 25–42.

As to expression, calcified shell.

The chain is Cuticle protein CP434 from Cancer pagurus (Rock crab).